A 491-amino-acid polypeptide reads, in one-letter code: Chromosomal replication initiator protein DnaA (491 aa).

Residues 1-69 form a domain I, interacts with DnaA modulators region; the sequence is MTTWDKCLKK…TIQECHGNDL (69 aa). The tract at residues 69–154 is domain II; that stretch reads LIIEYSNKKF…KEDEEYSFGL (86 aa). Residues 155 to 371 are domain III, AAA+ region; that stretch reads PLKEKYVFDS…GALNRVLTTS (217 aa). The ATP site is built by glycine 199, glycine 201, lysine 202, and threonine 203. Positions 372-491 are domain IV, binds dsDNA; the sequence is KFNHKDPTIE…YELLLDKISR (120 aa).

It belongs to the DnaA family. Oligomerizes as a right-handed, spiral filament on DNA at oriC.

The protein localises to the cytoplasm. Functionally, plays an essential role in the initiation and regulation of chromosomal replication. ATP-DnaA binds to the origin of replication (oriC) to initiate formation of the DNA replication initiation complex once per cell cycle. Binds the DnaA box (a 9 base pair repeat at the origin) and separates the double-stranded (ds)DNA. Forms a right-handed helical filament on oriC DNA; dsDNA binds to the exterior of the filament while single-stranded (ss)DNA is stabiized in the filament's interior. The ATP-DnaA-oriC complex binds and stabilizes one strand of the AT-rich DNA unwinding element (DUE), permitting loading of DNA polymerase. After initiation quickly degrades to an ADP-DnaA complex that is not apt for DNA replication. Binds acidic phospholipids. This chain is Chromosomal replication initiator protein DnaA, found in Francisella tularensis subsp. novicida (strain U112).